Consider the following 39-residue polypeptide: Photosystem II reaction center protein J (39 aa).

The chain crosses the membrane as a helical span at residues 9–29 (LWMVATVGGLAAGGLLILFVF).

Belongs to the PsbJ family. As to quaternary structure, PSII is composed of 1 copy each of membrane proteins PsbA, PsbB, PsbC, PsbD, PsbE, PsbF, PsbH, PsbI, PsbJ, PsbK, PsbL, PsbM, PsbT, PsbX, PsbY, PsbZ, Psb30/Ycf12, at least 3 peripheral proteins of the oxygen-evolving complex and a large number of cofactors. It forms dimeric complexes.

The protein resides in the plastid. Its subcellular location is the chloroplast thylakoid membrane. One of the components of the core complex of photosystem II (PSII). PSII is a light-driven water:plastoquinone oxidoreductase that uses light energy to abstract electrons from H(2)O, generating O(2) and a proton gradient subsequently used for ATP formation. It consists of a core antenna complex that captures photons, and an electron transfer chain that converts photonic excitation into a charge separation. The protein is Photosystem II reaction center protein J of Emiliania huxleyi (Coccolithophore).